The sequence spans 421 residues: Gamma-glutamyl phosphate reductase (421 aa).

This sequence belongs to the gamma-glutamyl phosphate reductase family.

It is found in the cytoplasm. The enzyme catalyses L-glutamate 5-semialdehyde + phosphate + NADP(+) = L-glutamyl 5-phosphate + NADPH + H(+). It functions in the pathway amino-acid biosynthesis; L-proline biosynthesis; L-glutamate 5-semialdehyde from L-glutamate: step 2/2. Catalyzes the NADPH-dependent reduction of L-glutamate 5-phosphate into L-glutamate 5-semialdehyde and phosphate. The product spontaneously undergoes cyclization to form 1-pyrroline-5-carboxylate. The polypeptide is Gamma-glutamyl phosphate reductase (Pseudomonas savastanoi pv. phaseolicola (strain 1448A / Race 6) (Pseudomonas syringae pv. phaseolicola (strain 1448A / Race 6))).